We begin with the raw amino-acid sequence, 235 residues long: NAD(P)H-hydrate epimerase (235 aa).

A YjeF N-terminal domain is found at 12–218 (AIVMDQLLMG…EFLKETNLTI (207 aa)). 62–66 (NNGGD) is a binding site for (6S)-NADPHX. K(+)-binding residues include Asn63 and Asp127. (6S)-NADPHX-binding positions include 131-137 (GYSFKGD) and Asp161. Position 164 (Ser164) interacts with K(+).

The protein belongs to the NnrE/AIBP family. Requires K(+) as cofactor.

It catalyses the reaction (6R)-NADHX = (6S)-NADHX. The catalysed reaction is (6R)-NADPHX = (6S)-NADPHX. Catalyzes the epimerization of the S- and R-forms of NAD(P)HX, a damaged form of NAD(P)H that is a result of enzymatic or heat-dependent hydration. This is a prerequisite for the S-specific NAD(P)H-hydrate dehydratase to allow the repair of both epimers of NAD(P)HX. The sequence is that of NAD(P)H-hydrate epimerase from Dictyostelium discoideum (Social amoeba).